The chain runs to 84 residues: Small ribosomal subunit protein bS18 (84 aa).

The protein belongs to the bacterial ribosomal protein bS18 family. In terms of assembly, part of the 30S ribosomal subunit. Forms a tight heterodimer with protein bS6.

In terms of biological role, binds as a heterodimer with protein bS6 to the central domain of the 16S rRNA, where it helps stabilize the platform of the 30S subunit. This is Small ribosomal subunit protein bS18 from Mycobacterium leprae (strain Br4923).